We begin with the raw amino-acid sequence, 286 residues long: Beta-lactamase SHV-46 (286 aa).

A signal peptide spans Met1–Ala21. Ser66 acts as the Acyl-ester intermediate in catalysis. Cys73 and Cys119 are joined by a disulfide. Glu164 (proton acceptor) is an active-site residue. Residue Lys230 to Gly232 coordinates substrate.

It belongs to the class-A beta-lactamase family.

It carries out the reaction a beta-lactam + H2O = a substituted beta-amino acid. The polypeptide is Beta-lactamase SHV-46 (bla) (Klebsiella oxytoca).